Reading from the N-terminus, the 252-residue chain is Octanoyltransferase (252 aa).

Residues 1 to 21 (MPSAPAAPAAPAAPDAAASVA) show a composition bias toward low complexity. Residues 1–22 (MPSAPAAPAAPAAPDAAASVAP) are disordered. Residues 56-237 (PDTDDEIWVV…RLIAHLDGAT (182 aa)) form the BPL/LPL catalytic domain. Substrate is bound by residues 96–103 (RGGQITYH), 168–170 (ALG), and 181–183 (GLS). The Acyl-thioester intermediate role is filled by Cys-199.

The protein belongs to the LipB family.

The protein resides in the cytoplasm. It carries out the reaction octanoyl-[ACP] + L-lysyl-[protein] = N(6)-octanoyl-L-lysyl-[protein] + holo-[ACP] + H(+). It functions in the pathway protein modification; protein lipoylation via endogenous pathway; protein N(6)-(lipoyl)lysine from octanoyl-[acyl-carrier-protein]: step 1/2. In terms of biological role, catalyzes the transfer of endogenously produced octanoic acid from octanoyl-acyl-carrier-protein onto the lipoyl domains of lipoate-dependent enzymes. Lipoyl-ACP can also act as a substrate although octanoyl-ACP is likely to be the physiological substrate. The polypeptide is Octanoyltransferase (Burkholderia pseudomallei (strain 668)).